Consider the following 651-residue polypeptide: Probable potassium transport system protein Kup (651 aa).

The next 12 membrane-spanning stretches (helical) occupy residues 30 to 50 (LALAALGIVFGDIGTSVLYSL), 71 to 91 (IISMIFWSILLVVCVKYVIFV), 124 to 144 (LLLGIVGAGLFYGDSFITPAI), 158 to 178 (PDAEKIVLPASVVILTLLFIV), 190 to 210 (FGPVMATWFLTLAALGIPWII), 233 to 253 (AMAFIAMGAVVLTITGAEALY), 268 to 288 (WFGLVLPCLLINYLGQGAMIL), 310 to 330 (LVTIATMATVIASQAVISGAF), 358 to 378 (IYIPEVNWTLFIGVLALILIF), 387 to 407 (AYGLAVTGTFLLTTSLFLVLA), 413 to 433 (WPMWALIFFGVIVGGVELSIF), and 437 to 457 (LLKIASGGWIPLLFATIVVII).

Belongs to the HAK/KUP transporter (TC 2.A.72) family.

The protein resides in the cell membrane. The catalysed reaction is K(+)(in) + H(+)(in) = K(+)(out) + H(+)(out). Its function is as follows. Transport of potassium into the cell. Likely operates as a K(+):H(+) symporter. The polypeptide is Probable potassium transport system protein Kup (Cutibacterium acnes (strain DSM 16379 / KPA171202) (Propionibacterium acnes)).